The following is an 830-amino-acid chain: Ent-cassa-12,15-diene synthase (830 aa).

The interval 1-50 (MMLLGSPSSGGYGGKFAGASPAGGTTTMAPSAKQPSSRAPPPGITGGRND) is disordered. Polar residues predominate over residues 23 to 37 (GGTTTMAPSAKQPSS). Asp-577, Asp-581, Asn-721, and Glu-729 together coordinate Mg(2+). The DDXXD motif motif lies at 577–581 (DDLFD).

Belongs to the terpene synthase family. Mg(2+) is required as a cofactor. Expressed in roots and stems.

It carries out the reaction ent-copalyl diphosphate = ent-cassa-12,15-diene + diphosphate. Its function is as follows. Involved in phytocassane phytoalexins biosynthesis. Catalyzes the conversion of ent-copalyl diphosphate to the phytoalexin precursor ent-cassa-12,15-diene. This Oryza sativa subsp. indica (Rice) protein is Ent-cassa-12,15-diene synthase (KSL7).